We begin with the raw amino-acid sequence, 251 residues long: Pyrroline-5-carboxylate reductase (251 aa).

This sequence belongs to the pyrroline-5-carboxylate reductase family.

It is found in the cytoplasm. It carries out the reaction L-proline + NADP(+) = (S)-1-pyrroline-5-carboxylate + NADPH + 2 H(+). The catalysed reaction is L-proline + NAD(+) = (S)-1-pyrroline-5-carboxylate + NADH + 2 H(+). It functions in the pathway amino-acid biosynthesis; L-proline biosynthesis; L-proline from L-glutamate 5-semialdehyde: step 1/1. Catalyzes the reduction of 1-pyrroline-5-carboxylate (PCA) to L-proline. The protein is Pyrroline-5-carboxylate reductase (proC) of Methanobrevibacter smithii.